We begin with the raw amino-acid sequence, 521 residues long: 2-isopropylmalate synthase (521 aa).

The 263-residue stretch at 5 to 267 (VIIFDTTLRD…HTNIKHQEIH (263 aa)) folds into the Pyruvate carboxyltransferase domain. Mn(2+) is bound by residues D14, H202, H204, and N238. Positions 392–521 (KLNYLSVQSG…FAQKTVMETL (130 aa)) are regulatory domain.

It belongs to the alpha-IPM synthase/homocitrate synthase family. LeuA type 1 subfamily. In terms of assembly, homodimer. The cofactor is Mn(2+).

It is found in the cytoplasm. It carries out the reaction 3-methyl-2-oxobutanoate + acetyl-CoA + H2O = (2S)-2-isopropylmalate + CoA + H(+). It functions in the pathway amino-acid biosynthesis; L-leucine biosynthesis; L-leucine from 3-methyl-2-oxobutanoate: step 1/4. Catalyzes the condensation of the acetyl group of acetyl-CoA with 3-methyl-2-oxobutanoate (2-ketoisovalerate) to form 3-carboxy-3-hydroxy-4-methylpentanoate (2-isopropylmalate). This chain is 2-isopropylmalate synthase, found in Tolumonas auensis (strain DSM 9187 / NBRC 110442 / TA 4).